The primary structure comprises 180 residues: Pyruvoyl-dependent arginine decarboxylase (180 aa).

Pyruvic acid (Ser) is present on Ser41.

Belongs to the PdaD family. The cofactor is pyruvate.

The enzyme catalyses L-arginine + H(+) = agmatine + CO2. In Methanococcoides burtonii (strain DSM 6242 / NBRC 107633 / OCM 468 / ACE-M), this protein is Pyruvoyl-dependent arginine decarboxylase.